The following is a 419-amino-acid chain: tRNA modification GTPase MnmE (419 aa).

3 residues coordinate (6S)-5-formyl-5,6,7,8-tetrahydrofolate: R2, E59, and R99. Positions 197–343 (GLSVVIAGPP…LHTMIVEMAR (147 aa)) constitute a TrmE-type G domain. Position 207 (N207) interacts with K(+). GTP is bound by residues 207–212 (NAGKST), 226–232 (SPVAGTT), and 251–254 (DTAG). S211 lines the Mg(2+) pocket. 3 residues coordinate K(+): S226, V228, and T231. Position 232 (T232) interacts with Mg(2+). Position 419 (K419) interacts with (6S)-5-formyl-5,6,7,8-tetrahydrofolate.

It belongs to the TRAFAC class TrmE-Era-EngA-EngB-Septin-like GTPase superfamily. TrmE GTPase family. In terms of assembly, homodimer. Heterotetramer of two MnmE and two MnmG subunits. The cofactor is K(+).

Its subcellular location is the cytoplasm. In terms of biological role, exhibits a very high intrinsic GTPase hydrolysis rate. Involved in the addition of a carboxymethylaminomethyl (cmnm) group at the wobble position (U34) of certain tRNAs, forming tRNA-cmnm(5)s(2)U34. The sequence is that of tRNA modification GTPase MnmE from Sphingopyxis alaskensis (strain DSM 13593 / LMG 18877 / RB2256) (Sphingomonas alaskensis).